We begin with the raw amino-acid sequence, 608 residues long: MATITASHFVSHVCGGATSGESKVGLGQLALRSQAVTHNGLRPVNKIDMLQLRTSAKKPSKNGRENEGGMAAGTIVCKQQGMNLVFVGCEVGPWCKTGGLGDVLGGLPPALAARGHRVMTVCPRYDQYKDAWDTCVVVELQVGDRIEPVRFFHSYKRGVDRVFVDHPMFLEKVWGKTGSMLYGPKAGKDYKDNQLRFSLLCQAALEAPRVLNLNSSNYFSGPYGEDVVFVANDWHTALLPCYLKTMYQSRGIYMNAKVAFCIHNIAYQGRFAFSDFSLLNLPDEYKGSFDFIDGYDKPVKGRKINWMKAGIREADRVFTVSPNYAKELVSCVSKGVELDNHIRDCGITGICNGMDTQEWNPATDKYLAVKYDITTVMQAKPLLKEALQAAVGLPVDRNIPLIGFIGRLEEQKGSDILYAAISKFISMDVQILILGTGKKKFEQQIEQLEVMYPDKARGVAKFNVPLAHMITAGADFMLIPSRFEPCGLIQLHAMRYGTPCICASTGGLVDTVKEGYTGFHMGAFNVDCETVDPEDVLKVITTVGRALAMYGTLAFTEMIKNCMSQELSWKGPAKNWETVLLSLGVAGSEPGVEGDEIAPLAKENVATP.

The N-terminal 76 residues, 1–76, are a transit peptide targeting the chloroplast; it reads MATITASHFV…EGGMAAGTIV (76 aa). Lys96 contacts ADP-alpha-D-glucose.

This sequence belongs to the glycosyltransferase 1 family. Bacterial/plant glycogen synthase subfamily.

The protein localises to the plastid. It is found in the chloroplast. Its subcellular location is the amyloplast. It carries out the reaction an NDP-alpha-D-glucose + [(1-&gt;4)-alpha-D-glucosyl](n) = [(1-&gt;4)-alpha-D-glucosyl](n+1) + a ribonucleoside 5'-diphosphate + H(+). It functions in the pathway glycan biosynthesis; starch biosynthesis. In terms of biological role, required for the synthesis of amylose. The protein is Granule-bound starch synthase 1, chloroplastic/amyloplastic (WAXY) of Ipomoea batatas (Sweet potato).